The primary structure comprises 277 residues: NH(3)-dependent NAD(+) synthetase (277 aa).

36–43 (GLSGGIDS) serves as a coordination point for ATP. D42 lines the Mg(2+) pocket. A deamido-NAD(+)-binding site is contributed by R118. T138 is an ATP binding site. E143 is a Mg(2+) binding site. Positions 167 and 189 each coordinate ATP.

The protein belongs to the NAD synthetase family. In terms of assembly, homodimer.

It catalyses the reaction deamido-NAD(+) + NH4(+) + ATP = AMP + diphosphate + NAD(+) + H(+). It participates in cofactor biosynthesis; NAD(+) biosynthesis; NAD(+) from deamido-NAD(+) (ammonia route): step 1/1. Functionally, catalyzes the ATP-dependent amidation of deamido-NAD to form NAD. Uses ammonia as a nitrogen source. This is NH(3)-dependent NAD(+) synthetase from Chlorobaculum tepidum (strain ATCC 49652 / DSM 12025 / NBRC 103806 / TLS) (Chlorobium tepidum).